Here is a 30-residue protein sequence, read N- to C-terminus: V-type proton ATPase catalytic subunit A isoform 1 (30 aa).

The protein belongs to the ATPase alpha/beta chains family. As to quaternary structure, V-ATPase is a heteromultimeric enzyme composed of a peripheral catalytic V1 complex (main components: subunits A, B, C, D, E, and F) attached to an integral membrane V0 proton pore complex (main component: the proteolipid protein).

The enzyme catalyses ATP + H2O + 4 H(+)(in) = ADP + phosphate + 5 H(+)(out). Functionally, catalytic subunit of the peripheral V1 complex of vacuolar ATPase. V-ATPase vacuolar ATPase is responsible for acidifying a variety of intracellular compartments in eukaryotic cells. The polypeptide is V-type proton ATPase catalytic subunit A isoform 1 (Psilotum nudum (Whisk fern)).